The sequence spans 248 residues: Putative homeobox-leucine zipper protein HOX26 (248 aa).

A disordered region spans residues 50–118; the sequence is KKVAAAAVVA…GDEEGASRKK (69 aa). Residues 79–89 are compositionally biased toward basic residues; it reads RQRRSCKKGRR. A DNA-binding region (homeobox) is located at residues 114-173; the sequence is ASRKKLRLTGEQATLLEDSFRAHNILSHAEKQELAGKLGLSARQVEVWFQNRRARTKLKQ. Residues 172–216 form a leucine-zipper region; the sequence is KQTEADCDLLRRWCDHLAADNARLRRDLAELRRSSSSPPVSGLAV.

Belongs to the HD-ZIP homeobox family. Class II subfamily.

The protein resides in the nucleus. Probable transcription factor. In Oryza sativa subsp. japonica (Rice), this protein is Putative homeobox-leucine zipper protein HOX26 (HOX26).